We begin with the raw amino-acid sequence, 425 residues long: Serine--tRNA ligase 2 (425 aa).

230 to 232 (TAE) is a binding site for L-serine. Residue 261-263 (REE) participates in ATP binding. An L-serine-binding site is contributed by Glu284. Position 348 to 351 (348 to 351 (EISS)) interacts with ATP. Ser383 lines the L-serine pocket.

It belongs to the class-II aminoacyl-tRNA synthetase family. Type-1 seryl-tRNA synthetase subfamily. As to quaternary structure, homodimer. The tRNA molecule binds across the dimer.

It localises to the cytoplasm. The enzyme catalyses tRNA(Ser) + L-serine + ATP = L-seryl-tRNA(Ser) + AMP + diphosphate + H(+). The catalysed reaction is tRNA(Sec) + L-serine + ATP = L-seryl-tRNA(Sec) + AMP + diphosphate + H(+). It participates in aminoacyl-tRNA biosynthesis; selenocysteinyl-tRNA(Sec) biosynthesis; L-seryl-tRNA(Sec) from L-serine and tRNA(Sec): step 1/1. Its function is as follows. Catalyzes the attachment of serine to tRNA(Ser). Is also able to aminoacylate tRNA(Sec) with serine, to form the misacylated tRNA L-seryl-tRNA(Sec), which will be further converted into selenocysteinyl-tRNA(Sec). This Lactiplantibacillus plantarum (strain ATCC BAA-793 / NCIMB 8826 / WCFS1) (Lactobacillus plantarum) protein is Serine--tRNA ligase 2.